The chain runs to 245 residues: Ribonuclease PH (245 aa).

Residues Arg93 and 131 to 133 (GTR) each bind phosphate.

Belongs to the RNase PH family. As to quaternary structure, homohexameric ring arranged as a trimer of dimers.

It carries out the reaction tRNA(n+1) + phosphate = tRNA(n) + a ribonucleoside 5'-diphosphate. Phosphorolytic 3'-5' exoribonuclease that plays an important role in tRNA 3'-end maturation. Removes nucleotide residues following the 3'-CCA terminus of tRNAs; can also add nucleotides to the ends of RNA molecules by using nucleoside diphosphates as substrates, but this may not be physiologically important. Probably plays a role in initiation of 16S rRNA degradation (leading to ribosome degradation) during starvation. This chain is Ribonuclease PH, found in Corynebacterium efficiens (strain DSM 44549 / YS-314 / AJ 12310 / JCM 11189 / NBRC 100395).